The chain runs to 302 residues: TATA-box-binding protein (302 aa).

2 disordered regions span residues 1–22 (MEQN…GAMT) and 50–81 (SLLE…QTPQ). The segment covering 50–70 (SLLEEQQRQQQQQQAASQQQG) has biased composition (low complexity). 2 repeat units span residues 128–204 (LQNI…ARVV) and 218–295 (IQNM…YPIL).

This sequence belongs to the TBP family. As to expression, enriched in testis but hardly detectable in the ovary (at protein level).

It localises to the nucleus. Its function is as follows. General transcription factor that functions at the core of the DNA-binding multiprotein factor TFIID. Binding of TFIID to the TATA box is the initial transcriptional step of the pre-initiation complex (PIC), playing a role in the activation of eukaryotic genes transcribed by RNA polymerase II. Members of the TBP family are differentially required for transcription and development during early embryogenesis. Regulates mRNA levels in the early embryo by both transcriptional and post-transcriptional mechanisms. Required for transcription of a subset of genes at the mid-blastula transition (MBT). Negatively regulates the expression of other embryonic genes, including autoregulation of the tbp promoter itself. Also functions within a transcription-dependent mechanism to direct the temporally-regulated degradation of a subset of maternal mRNAs after the MBT. This is part of a general mechanism to regulate the maternal to zygotic transition and is required for normal embryonic development. Binds to promoters of a subset of genes. Required for gastrulation. The polypeptide is TATA-box-binding protein (Danio rerio (Zebrafish)).